Consider the following 483-residue polypeptide: Betaine aldehyde dehydrogenase (483 aa).

The K(+) site is built by Ile-27 and Asp-93. 149–151 (GAW) contacts NAD(+). Lys-161 functions as the Charge relay system in the catalytic mechanism. An NAD(+)-binding site is contributed by 175 to 178 (KPSE). Val-179 is a binding site for K(+). Residue 228–231 (SVPT) participates in NAD(+) binding. A K(+)-binding site is contributed by Val-243. Glu-249 functions as the Proton acceptor in the catalytic mechanism. NAD(+) contacts are provided by Gly-251, Cys-283, and Glu-380. The active-site Nucleophile is Cys-283. Position 283 is a cysteine sulfenic acid (-SOH) (Cys-283). K(+) contacts are provided by Lys-450 and Gly-453. Glu-457 acts as the Charge relay system in catalysis.

Belongs to the aldehyde dehydrogenase family. As to quaternary structure, dimer of dimers. It depends on K(+) as a cofactor.

The enzyme catalyses betaine aldehyde + NAD(+) + H2O = glycine betaine + NADH + 2 H(+). It functions in the pathway amine and polyamine biosynthesis; betaine biosynthesis via choline pathway; betaine from betaine aldehyde: step 1/1. Involved in the biosynthesis of the osmoprotectant glycine betaine. Catalyzes the irreversible oxidation of betaine aldehyde to the corresponding acid. The polypeptide is Betaine aldehyde dehydrogenase (Cereibacter sphaeroides (strain ATCC 17029 / ATH 2.4.9) (Rhodobacter sphaeroides)).